A 352-amino-acid chain; its full sequence is Photosystem II D2 protein (352 aa).

Topologically, residues Met-1–Gly-31 are cytoplasmic. The chain crosses the membrane as a helical span at residues Trp-32–Thr-53. The Lumenal portion of the chain corresponds to Phe-54–Gly-108. Residues Gly-109–Glu-131 traverse the membrane as a helical segment. His-117 serves as a coordination point for chlorophyll a. Gln-129 lines the pheophytin a pocket. The Cytoplasmic segment spans residues Ile-132–Pro-140. A helical membrane pass occupies residues Tyr-141–Tyr-160. Position 142 (Asn-142) interacts with pheophytin a. Residues Pro-161–Leu-193 are Lumenal-facing. Residues Asn-194–Thr-217 traverse the membrane as a helical segment. His-197 lines the chlorophyll a pocket. Positions 214 and 261 each coordinate a plastoquinone. Fe cation is bound at residue His-214. Residues Val-218–Arg-265 are Cytoplasmic-facing. A helical membrane pass occupies residues Trp-266 to Gly-288. His-268 provides a ligand contact to Fe cation. Residues Leu-289–Leu-352 are Lumenal-facing.

Belongs to the reaction center PufL/M/PsbA/D family. As to quaternary structure, PSII is composed of 1 copy each of membrane proteins PsbA, PsbB, PsbC, PsbD, PsbE, PsbF, PsbH, PsbI, PsbJ, PsbK, PsbL, PsbM, PsbT, PsbX, PsbY, PsbZ, Psb30/Ycf12, peripheral proteins PsbO, CyanoQ (PsbQ), PsbU, PsbV and a large number of cofactors. It forms dimeric complexes. Part of a photosystem II (PSII) assembly intermediate complex PSII-I; crystallized from a strain deleted of psbJ, it forms monomeric PSII before addition of the oxygen evolving complex. PSII-I includes 3 assembly factors not found in mature PSII (Psb27, Psb28 and Psb34). The D1/D2 heterodimer binds P680, chlorophylls that are the primary electron donor of PSII, and subsequent electron acceptors. It shares a non-heme iron and each subunit binds pheophytin, quinone, additional chlorophylls, carotenoids and lipids. There is also a Cl(-1) ion associated with D1 and D2, which is required for oxygen evolution. PSII binds additional chlorophylls, carotenoids and specific lipids. is required as a cofactor.

The protein localises to the cellular thylakoid membrane. The enzyme catalyses 2 a plastoquinone + 4 hnu + 2 H2O = 2 a plastoquinol + O2. Functionally, photosystem II (PSII) is a light-driven water:plastoquinone oxidoreductase that uses light energy to abstract electrons from H(2)O, generating O(2) and a proton gradient subsequently used for ATP formation. It consists of a core antenna complex that captures photons, and an electron transfer chain that converts photonic excitation into a charge separation. The D1/D2 (PsbA/PsbD) reaction center heterodimer binds P680, the primary electron donor of PSII as well as several subsequent electron acceptors. D2 is needed for assembly of a stable PSII complex. This chain is Photosystem II D2 protein, found in Thermosynechococcus vestitus (strain NIES-2133 / IAM M-273 / BP-1).